The following is a 207-amino-acid chain: Large ribosomal subunit protein bL20 (207 aa).

Positions 117–161 are disordered; the sequence is QETQPQPEEKTSLQPEKVLSTELSEEKSDDTLETKPQTTQVKAKK. Over residues 140 to 149 the composition is skewed to basic and acidic residues; that stretch reads SEEKSDDTLE.

The protein belongs to the bacterial ribosomal protein bL20 family.

Functionally, binds directly to 23S ribosomal RNA and is necessary for the in vitro assembly process of the 50S ribosomal subunit. It is not involved in the protein synthesizing functions of that subunit. This chain is Large ribosomal subunit protein bL20, found in Onion yellows phytoplasma (strain OY-M).